Here is a 261-residue protein sequence, read N- to C-terminus: 6-carboxyhexanoate--CoA ligase (261 aa).

It belongs to the BioW family. In terms of assembly, homodimer. The cofactor is Mg(2+).

It catalyses the reaction heptanedioate + ATP + CoA = 6-carboxyhexanoyl-CoA + AMP + diphosphate. Its pathway is metabolic intermediate metabolism; pimeloyl-CoA biosynthesis; pimeloyl-CoA from pimelate: step 1/1. Functionally, catalyzes the transformation of pimelate into pimeloyl-CoA with concomitant hydrolysis of ATP to AMP. The polypeptide is 6-carboxyhexanoate--CoA ligase (Bacillus licheniformis (strain ATCC 14580 / DSM 13 / JCM 2505 / CCUG 7422 / NBRC 12200 / NCIMB 9375 / NCTC 10341 / NRRL NRS-1264 / Gibson 46)).